A 465-amino-acid polypeptide reads, in one-letter code: Cysteine--tRNA ligase (465 aa).

Residue cysteine 27 participates in Zn(2+) binding. A 'HIGH' region motif is present at residues 29 to 39; sequence PTVYNFFHIGN. Residues cysteine 207, histidine 232, and glutamate 236 each contribute to the Zn(2+) site. Residues 264 to 268 carry the 'KMSKS' region motif; it reads KMSKS. Lysine 267 lines the ATP pocket.

Belongs to the class-I aminoacyl-tRNA synthetase family. Monomer. The cofactor is Zn(2+).

The protein localises to the cytoplasm. The catalysed reaction is tRNA(Cys) + L-cysteine + ATP = L-cysteinyl-tRNA(Cys) + AMP + diphosphate. The sequence is that of Cysteine--tRNA ligase from Clostridium botulinum (strain Langeland / NCTC 10281 / Type F).